The chain runs to 294 residues: Coiled-coil domain-containing protein 69 (294 aa).

The disordered stretch occupies residues 1-43; it reads MGCGHSRLSCCKPPKKRRQRPDQPPKPEPQELGPLNGDTATTD. Residue Gly-2 is the site of N-myristoyl glycine attachment. The segment covering 20–29 has biased composition (basic and acidic residues); it reads RPDQPPKPEP. Residues 47–270 adopt a coiled-coil conformation; it reads ASEEAEQHQK…QEKEELLYRV (224 aa). Phosphoserine occurs at positions 152 and 239.

This sequence belongs to the CCDC69 family.

The protein localises to the cytoplasm. It localises to the cytoskeleton. The protein resides in the spindle. Its subcellular location is the midbody. In terms of biological role, may act as a scaffold to regulate the recruitment and assembly of spindle midzone components. Required for the localization of AURKB and PLK1 to the spindle midzone. This Bos taurus (Bovine) protein is Coiled-coil domain-containing protein 69 (CCDC69).